The primary structure comprises 265 residues: Urease accessory protein UreH (265 aa).

Belongs to the UreD family. As to quaternary structure, ureH, UreF and UreG form a complex that acts as a GTP-hydrolysis-dependent molecular chaperone, activating the urease apoprotein by helping to assemble the nickel containing metallocenter of UreC. The UreE protein probably delivers the nickel.

Its subcellular location is the cytoplasm. Required for maturation of urease via the functional incorporation of the urease nickel metallocenter. The chain is Urease accessory protein UreH from Helicobacter pylori (strain J99 / ATCC 700824) (Campylobacter pylori J99).